We begin with the raw amino-acid sequence, 495 residues long: Lysine--tRNA ligase (495 aa).

2 residues coordinate Mg(2+): E406 and E413.

This sequence belongs to the class-II aminoacyl-tRNA synthetase family. In terms of assembly, homodimer. The cofactor is Mg(2+).

Its subcellular location is the cytoplasm. The catalysed reaction is tRNA(Lys) + L-lysine + ATP = L-lysyl-tRNA(Lys) + AMP + diphosphate. In Staphylococcus aureus, this protein is Lysine--tRNA ligase (lysS).